A 147-amino-acid polypeptide reads, in one-letter code: CRISP-1 (147 aa).

This sequence belongs to the CRISP family. In terms of tissue distribution, expressed by the venom gland.

It localises to the secreted. The protein is CRISP-1 of Phoneutria keyserlingi (Brazilian wandering spider).